The primary structure comprises 277 residues: Large ribosomal subunit protein uL2c (277 aa).

The tract at residues 224 to 257 is disordered; the sequence is VMNPIDHPHGGGEGRAPIGRKKPLTPWGHPALGR.

It belongs to the universal ribosomal protein uL2 family. As to quaternary structure, part of the 50S ribosomal subunit.

It is found in the plastid. The protein resides in the chloroplast. The protein is Large ribosomal subunit protein uL2c (rpl2) of Anthoceros angustus (Hornwort).